The primary structure comprises 383 residues: Odorant receptor 94b (383 aa).

Residues 1-41 (MESTNRLSAIQTLLVIQRWIGLLKWENEGEDGVLTWLKRIY) lie on the Cytoplasmic side of the membrane. A helical membrane pass occupies residues 42–62 (PFVLHLPLTFTYIALMWYEAI). Residues 63–70 (TSSDFEEA) lie on the Extracellular side of the membrane. A helical membrane pass occupies residues 71–91 (GQVLYMSITELALVTKLLNIW). At 92 to 130 (YRRHEAASLIHELQHDPAFNLRNSEEIKFWQQNQRNFKR) the chain is on the cytoplasmic side. The helical transmembrane segment at 131 to 151 (IFYWYIWGSLFVAVMGYISVF) threads the bilayer. Over 152–174 (FQEDYELPFGYYVPFEWRTRERY) the chain is Extracellular. The helical transmembrane segment at 175–195 (FYAWGYNVVAMTLCCLSNILL) threads the bilayer. The Cytoplasmic portion of the chain corresponds to 196–250 (DTLGCYFMFHIASLFRLLGMRLEALKNAAEEKARPELRRIFQLHTKVRRLTRECE). The chain crosses the membrane as a helical span at residues 251–271 (VLVSPYVLSQVVFSAFIICFS). The Extracellular segment spans residues 272 to 284 (AYRLVHMGFKQRP). A helical transmembrane segment spans residues 285 to 305 (GLFVTTVQFVAVMIVQIFLPC). Residues 306-358 (YYGNELTFHANALTNSVFGTNWLEYSVGTRKLLNCYMEFLKRPVKVRAGVFFE) are Cytoplasmic-facing. Residues 359–379 (IGLPIFVKTINNAYSFFALLL) traverse the membrane as a helical segment. The Extracellular segment spans residues 380–383 (KISK).

This sequence belongs to the insect chemoreceptor superfamily. Heteromeric odorant receptor channel (TC 1.A.69) family. Or2a subfamily. As to quaternary structure, interacts with Orco. Complexes exist early in the endomembrane system in olfactory sensory neurons (OSNs), coupling these complexes to the conserved ciliary trafficking pathway.

The protein localises to the cell membrane. In terms of biological role, odorant receptor which mediates acceptance or avoidance behavior, depending on its substrates. The odorant receptor repertoire encodes a large collection of odor stimuli that vary widely in identity, intensity, and duration. May form a complex with Orco to form odorant-sensing units, providing sensitive and prolonged odorant signaling and calcium permeability. This chain is Odorant receptor 94b (Or94b), found in Drosophila melanogaster (Fruit fly).